The chain runs to 134 residues: Large ribosomal subunit protein bL20 (134 aa).

It belongs to the bacterial ribosomal protein bL20 family.

Binds directly to 23S ribosomal RNA and is necessary for the in vitro assembly process of the 50S ribosomal subunit. It is not involved in the protein synthesizing functions of that subunit. The protein is Large ribosomal subunit protein bL20 of Rhizobium etli (strain ATCC 51251 / DSM 11541 / JCM 21823 / NBRC 15573 / CFN 42).